Consider the following 197-residue polypeptide: Protein Hikeshi (197 aa).

A required for F-X-F-G repeats-nucleoporins recognition and nuclear import region spans residues 18 to 55 (VAEDKFVFDLPDYENINHVVVFMLGTVPFPEGMGGSVY). Residues 124–134 (QTPVGNAAVSS) are flexible linker region involved in nuclear import of HSP70 proteins.

It belongs to the OPI10 family. Forms an asymmetric homodimer; required for binding and nuclear import of HSP70 proteins. Interacts with ATP-bound HSP70 proteins. Interacts with NUP62 and NUP153 (via F-X-F-G repeats). Interacts with HSPA8.

The protein resides in the cytoplasm. Its subcellular location is the cytosol. It localises to the nucleus. Acts as a specific nuclear import carrier for HSP70 proteins following heat-shock stress: acts by mediating the nucleoporin-dependent translocation of ATP-bound HSP70 proteins into the nucleus. HSP70 proteins import is required to protect cells from heat shock damages. Does not translocate ADP-bound HSP70 proteins into the nucleus. This is Protein Hikeshi from Bos taurus (Bovine).